A 293-amino-acid polypeptide reads, in one-letter code: Bifunctional protein FolD (293 aa).

Residues 164-166, S193, and T234 contribute to the NADP(+) site; that span reads GRS.

Belongs to the tetrahydrofolate dehydrogenase/cyclohydrolase family. As to quaternary structure, homodimer.

The enzyme catalyses (6R)-5,10-methylene-5,6,7,8-tetrahydrofolate + NADP(+) = (6R)-5,10-methenyltetrahydrofolate + NADPH. It carries out the reaction (6R)-5,10-methenyltetrahydrofolate + H2O = (6R)-10-formyltetrahydrofolate + H(+). It functions in the pathway one-carbon metabolism; tetrahydrofolate interconversion. Catalyzes the oxidation of 5,10-methylenetetrahydrofolate to 5,10-methenyltetrahydrofolate and then the hydrolysis of 5,10-methenyltetrahydrofolate to 10-formyltetrahydrofolate. This Azobacteroides pseudotrichonymphae genomovar. CFP2 protein is Bifunctional protein FolD.